The chain runs to 786 residues: LPS-assembly protein LptD (786 aa).

The signal sequence occupies residues 1-39; sequence MPPKPLFPNVFPGDGAPRKRRLALALLAVPGLVPAVSYA. Residues 767-786 form a disordered region; that stretch reads PGYTPLPPPPPPMSRFSNYE. Residues 770-779 are compositionally biased toward pro residues; the sequence is TPLPPPPPPM.

This sequence belongs to the LptD family. Component of the lipopolysaccharide transport and assembly complex. Interacts with LptE and LptA.

It localises to the cell outer membrane. Its function is as follows. Together with LptE, is involved in the assembly of lipopolysaccharide (LPS) at the surface of the outer membrane. This Burkholderia lata (strain ATCC 17760 / DSM 23089 / LMG 22485 / NCIMB 9086 / R18194 / 383) protein is LPS-assembly protein LptD.